A 318-amino-acid chain; its full sequence is Ribosome biogenesis protein RLP7 (318 aa).

Disordered regions lie at residues 1-49 (MSQP…NRFV) and 101-121 (AGSK…DEED). Over residues 19 to 40 (ADRTRLEKQELAKKRKEQEEKQ) the composition is skewed to basic and acidic residues. Residues 110–121 (ELQDVDEEDEED) are compositionally biased toward acidic residues.

Belongs to the universal ribosomal protein uL30 family.

It localises to the nucleus. Its subcellular location is the nucleolus. Its function is as follows. Involved in the biogenesis of the 60S ribosomal subunit. May act as a specificity factor that binds precursor rRNAs and tethers the enzymes that carry out the early 5' to 3' exonucleolytic reactions that generate the mature rRNAs. This is Ribosome biogenesis protein RLP7 (RLP7) from Kluyveromyces lactis (strain ATCC 8585 / CBS 2359 / DSM 70799 / NBRC 1267 / NRRL Y-1140 / WM37) (Yeast).